The following is a 330-amino-acid chain: Calponin-3 (330 aa).

Lys-23 bears the N6-acetyllysine mark. The 105-residue stretch at 26 to 130 (QQAEEDLRNW…TLVALAGLAK (105 aa)) folds into the Calponin-homology (CH) domain. Lys-158 carries the post-translational modification N6-methyllysine. 3 Calponin-like repeats span residues 164-189 (IGLQ…RHLY), 204-229 (ISLQ…RDIY), and 243-268 (ISLQ…RQVY). Positions 279-330 (PVIHNGSQGTGTNGSEISDSDYQAEYPDEYHGEYPDEYPREYQYGDDQGIDY) are disordered. Residues 306–318 (DEYHGEYPDEYPR) show a composition bias toward basic and acidic residues.

This sequence belongs to the calponin family.

In terms of biological role, thin filament-associated protein that is implicated in the regulation and modulation of smooth muscle contraction. It is capable of binding to actin, calmodulin and tropomyosin. The interaction of calponin with actin inhibits the actomyosin Mg-ATPase activity. This is Calponin-3 (Cnn3) from Rattus norvegicus (Rat).